Here is a 217-residue protein sequence, read N- to C-terminus: Small ribosomal subunit protein uS3 (217 aa).

The 70-residue stretch at 24 to 93 folds into the KH type-2 domain; it reads IKEFLEYKLS…NPQIDVIDVS (70 aa).

It belongs to the universal ribosomal protein uS3 family. As to quaternary structure, part of the 30S ribosomal subunit.

Its function is as follows. Binds the lower part of the 30S subunit head. The protein is Small ribosomal subunit protein uS3 of Pyrobaculum islandicum (strain DSM 4184 / JCM 9189 / GEO3).